Consider the following 259-residue polypeptide: Global transcriptional regulator CodY (259 aa).

The segment at 1–155 is GAF domain; it reads MELLAKTRKL…SSTVVGMEIL (155 aa). The H-T-H motif DNA-binding region spans 203 to 222; the sequence is ASKIADRVGITRSVIVNALR. Residue serine 215 is modified to Phosphoserine.

This sequence belongs to the CodY family.

It is found in the cytoplasm. DNA-binding global transcriptional regulator which is involved in the adaptive response to starvation and acts by directly or indirectly controlling the expression of numerous genes in response to nutrient availability. During rapid exponential growth, CodY is highly active and represses genes whose products allow adaptation to nutrient depletion. This Bacillus cereus (strain ATCC 10987 / NRS 248) protein is Global transcriptional regulator CodY.